The following is a 528-amino-acid chain: Coiled-coil domain-containing protein 116 (528 aa).

A disordered region spans residues 43–68 (GHVPHPPSTCGSSALQNQRRNKRHPQ). Over residues 51–60 (TCGSSALQNQ) the composition is skewed to polar residues. Residues 81 to 104 (HVLDSLETVVEKATERMAAMKTEA) adopt a coiled-coil conformation. Disordered stretches follow at residues 335-444 (PLFP…RQRA) and 497-528 (SSSPSSLCPEVTSSKVGPDMSLQEKGSLTHHS). Positions 363–378 (PTNSGQPHPTVSSPKT) are enriched in polar residues. Serine 389 carries the phosphoserine modification. Residues 419–429 (HSREKEPDSDP) are compositionally biased toward basic and acidic residues. Over residues 434–443 (PPVSLSSRQR) the composition is skewed to polar residues. Residues 497-510 (SSSPSSLCPEVTSS) show a composition bias toward low complexity.

It localises to the cytoplasm. It is found in the cytoskeleton. The protein localises to the microtubule organizing center. The protein resides in the centrosome. The chain is Coiled-coil domain-containing protein 116 (CCDC116) from Macaca fascicularis (Crab-eating macaque).